The sequence spans 177 residues: Large ribosomal subunit protein uL6 (177 aa).

It belongs to the universal ribosomal protein uL6 family. Part of the 50S ribosomal subunit.

In terms of biological role, this protein binds to the 23S rRNA, and is important in its secondary structure. It is located near the subunit interface in the base of the L7/L12 stalk, and near the tRNA binding site of the peptidyltransferase center. This chain is Large ribosomal subunit protein uL6, found in Pectobacterium atrosepticum (strain SCRI 1043 / ATCC BAA-672) (Erwinia carotovora subsp. atroseptica).